Here is a 304-residue protein sequence, read N- to C-terminus: Non-specific ribonucleoside hydrolase RihC (304 aa).

The active site involves histidine 233.

Belongs to the IUNH family. RihC subfamily.

In terms of biological role, hydrolyzes both purine and pyrimidine ribonucleosides with a broad-substrate specificity. In Escherichia coli (strain 55989 / EAEC), this protein is Non-specific ribonucleoside hydrolase RihC.